The sequence spans 346 residues: tRNA N6-adenosine threonylcarbamoyltransferase (346 aa).

Residues His-117 and His-121 each coordinate Fe cation. Substrate contacts are provided by residues 139–143 (QVSGG), Asp-172, Gly-185, Asp-189, and Asn-278. Residue Asp-308 participates in Fe cation binding.

Belongs to the KAE1 / TsaD family. Fe(2+) serves as cofactor.

It is found in the cytoplasm. The catalysed reaction is L-threonylcarbamoyladenylate + adenosine(37) in tRNA = N(6)-L-threonylcarbamoyladenosine(37) in tRNA + AMP + H(+). Its function is as follows. Required for the formation of a threonylcarbamoyl group on adenosine at position 37 (t(6)A37) in tRNAs that read codons beginning with adenine. Is involved in the transfer of the threonylcarbamoyl moiety of threonylcarbamoyl-AMP (TC-AMP) to the N6 group of A37, together with TsaE and TsaB. TsaD likely plays a direct catalytic role in this reaction. In Lactobacillus delbrueckii subsp. bulgaricus (strain ATCC 11842 / DSM 20081 / BCRC 10696 / JCM 1002 / NBRC 13953 / NCIMB 11778 / NCTC 12712 / WDCM 00102 / Lb 14), this protein is tRNA N6-adenosine threonylcarbamoyltransferase.